Consider the following 461-residue polypeptide: MLNLKVGIIGAGPSGLAMLRAFESEQKKGNPIPEIKCYEKQDNWGGMWNYTWRTGVGKYGEPIHGSMYKYLWSNGPKECLEFSDYTFMEHFKQPISSYPPREVLFDYIQGRIKQSNARDFIKFNTVARWVDYLEDKKQFRVIFDDLVKNETFEEYFDYLVVGTGHFSTPNMPYFKGIDSFPGTVMHAHDFRGADQFIDKDILLIGSSYSAEDIGVQCFKHGSKSVTISYRTNPIGAKWPKGIEEKPIVTHFEDNVAHFKDGSKKEYDAVILCTGYQHKFPFLPDNLRLKTKNNLYPDNLYKGVVFNENERLIFLGMQDQYYTFNMFDTQAWFARDYMLGRIALPNKEIRDKDIAKWVELEKTSVTGEEHVDFQTDYIKELIEMTDYPTFDLDRVAEMFKSWLNDKETNILNYRDKVYTSVMTGVTAEEHHTPWMKELDDSLERYLDEVEVDELELSKENYY.

7 residues coordinate FAD: Ser14, Glu39, Lys40, Gln41, Met47, Trp48, and His64. The NADP(+) site is built by Trp72 and Asn74. FAD contacts are provided by Asn74 and Ala127. Ser206, Ser207, Ser209, Arg230, and Thr231 together coordinate NADP(+). 2 residues coordinate FAD: Gln319 and Thr322. An NADP(+)-binding site is contributed by Arg413.

The protein belongs to the FMO family. Requires FAD as cofactor.

The catalysed reaction is trimethylamine + NADPH + O2 = trimethylamine N-oxide + NADP(+) + H2O. In terms of biological role, catalyzes the oxidation of trimethylamine (TMA) to produce trimethylamine N-oxide (TMAO). The produced TMAO is accumulated in the cell, functioning as a piezolyte, improving both growth and survival at high hydrostatic pressure (HHP). The chain is Trimethylamine monooxygenase from Myroides profundi.